The chain runs to 61 residues: Large ribosomal subunit protein uL29 (61 aa).

This sequence belongs to the universal ribosomal protein uL29 family.

In Campylobacter lari (strain RM2100 / D67 / ATCC BAA-1060), this protein is Large ribosomal subunit protein uL29.